The chain runs to 358 residues: RuBisCO accumulation factor 1 (358 aa).

Residues 11–194 (VSAAEAAELI…RQAIEKLLTD (184 aa)) are N-terminal alpha-helix. The segment at 218–344 (ARLIPVAGTF…VVLVLRPKKI (127 aa)) is C-terminal beta-sheet.

This sequence belongs to the RAF family. In terms of assembly, homodimer. Forms an RbcL(8)-Raf1(8) complex. Forms complexes of many stoichiometries with RbcL with and without RbcS. RbcX and Raf1 can bind simultaneously to RbcL. Interacts with both RuBisCO subunits (ccbL, ccbS), GroEL, DnaK and alpha and beta phycocyanin (cpcA, cpcB) in pull-down experiments with tagged protein. C-terminally tagged Raf1 does not interact with either RuBisCO subunit, suggesting its C-terminus is involved in binding.

The protein resides in the cytoplasm. Its function is as follows. A major RuBisCO chaperone. Acts after GroEL-GroES chaperonin to fold and/or assemble the large subunit of RuBisCO (ccbL, rbcL). Cooperates with RbcX in RbcL folding, plays the major role in assembly of dimers into RbcL(8)-Raf1(8) intermediate complexes. RbcS replaces Raf1, leading to holoenzyme formation. Functionally, required for optimal reconstitution of RbcL(8) upon expression in E.coli. Has been suggested to be involved in RuBisCO recycling and homeostasis rather than assembly. This chain is RuBisCO accumulation factor 1, found in Synechocystis sp. (strain ATCC 27184 / PCC 6803 / Kazusa).